The sequence spans 202 residues: NAD(P)H dehydrogenase (quinone) 2 (202 aa).

The 187-residue stretch at 4–190 (VLVLYYSSYG…AGAFHQGEIV (187 aa)) folds into the Flavodoxin-like domain. Residues 10–15 (SSYGHI) and 78–80 (TRF) contribute to the FMN site. Residue Tyr-12 coordinates NAD(+). Residue Trp-98 coordinates substrate. Residues 113–119 (STGTQHG) and His-134 each bind FMN.

It belongs to the WrbA family. FMN serves as cofactor.

The catalysed reaction is a quinone + NADH + H(+) = a quinol + NAD(+). It carries out the reaction a quinone + NADPH + H(+) = a quinol + NADP(+). The polypeptide is NAD(P)H dehydrogenase (quinone) 2 (Rhizobium meliloti (strain 1021) (Ensifer meliloti)).